The primary structure comprises 231 residues: MDGKKREVENGKNGNNIKDGNSSNTTNYGKDTKTTQTIKDVKDVKSVKKAFKELQEWLREKMKKEGLVRFMKDGYPLEFVEEDVVYFLGSRKRPNLKDFIKGITLVRTYAKLRERRKQFHKRSKKPIVKKYSAPKYTRVVAYMYRVLEEKGYTPDDRKRLIVYFFNFIKPDYMSNAGIYVCLEKFRTAKFLRNKKIEELRKELIKEIPPHLFLQIEAFLSLFPTFKRKKAT.

Residues 1–10 are compositionally biased toward basic and acidic residues; it reads MDGKKREVEN. The segment at 1–35 is disordered; that stretch reads MDGKKREVENGKNGNNIKDGNSSNTTNYGKDTKTT. Residues 11–24 are compositionally biased toward low complexity; sequence GKNGNNIKDGNSSN. The span at 25–35 shows a compositional bias: polar residues; that stretch reads TTNYGKDTKTT.

This is an uncharacterized protein from Aquifex aeolicus (strain VF5).